The following is a 267-amino-acid chain: Apolipoprotein A-I (267 aa).

An N-terminal signal peptide occupies residues 1-18 (MKATVLTLAVLFLTGSQA). Repeat copies occupy residues 68-89 (LKLL…EQLG) and 90-111 (PVTQ…QEMS). The tract at residues 68–267 (LKLLDNWDSV…EEYTKKLSTQ (200 aa)) is 10 X approximate tandem repeats. Met-110 carries the post-translational modification Methionine sulfoxide. One copy of the 3; half-length repeat lies at 112–122 (KDLEEVKAKVQ). Tandem repeats lie at residues 123 to 144 (PYLD…QKVE), 145 to 166 (PLRA…EKLS), 167 to 188 (PLGE…THLA), 189 to 210 (PYSD…ENGG), and 211 to 232 (ARLA…EKAK). At Met-136 the chain carries Methionine sulfoxide. One copy of the 9; half-length repeat lies at 233 to 243 (PALEDLRQGLL). The stretch at 244–267 (PVLESFKVSFLSALEEYTKKLSTQ) is repeat 10.

This sequence belongs to the apolipoprotein A1/A4/E family. In terms of assembly, homodimer. Interacts with APOA1BP and CLU. Component of a sperm activating protein complex (SPAP), consisting of APOA1, an immunoglobulin heavy chain, an immunoglobulin light chain and albumin. Interacts with NDRG1. Interacts with SCGB3A2. Interacts with NAXE and YJEFN3. In terms of processing, glycosylated. Post-translationally, palmitoylated. Phosphorylation sites are present in the extracellular medium. Major protein of plasma HDL, also found in chylomicrons.

It is found in the secreted. In terms of biological role, participates in the reverse transport of cholesterol from tissues to the liver for excretion by promoting cholesterol efflux from tissues and by acting as a cofactor for the lecithin cholesterol acyltransferase (LCAT). As part of the SPAP complex, activates spermatozoa motility. This is Apolipoprotein A-I (APOA1) from Papio hamadryas (Hamadryas baboon).